A 361-amino-acid polypeptide reads, in one-letter code: Outer mitochondrial transmembrane helix translocase (361 aa).

Residues 1–15 (MVHAEAFSRPLSRNE) lie on the Mitochondrial intermembrane side of the membrane. Residues 16–32 (VVGLIFRLTIFGAVTYF) form a helical membrane-spanning segment. Residues 33-361 (TIKWMVDAID…QNVLTHVCLD (329 aa)) lie on the Cytoplasmic side of the membrane. 133 to 140 (GPPGCGKT) is a binding site for ATP. The residue at position 322 (Ser322) is a Phosphoserine.

The protein belongs to the AAA ATPase family. MSP1 subfamily. In terms of assembly, interacts with GRIA2 and GRIP1 in an ATP-dependent manner. ATAD1-catalyzed ATP hydrolysis disrupts not only its binding to GRIA2 and GRIP1, but also interaction between GRIP1 and GRIA2, leading to AMPAR complex disassembly.

The protein localises to the mitochondrion outer membrane. It localises to the peroxisome membrane. It is found in the postsynaptic cell membrane. It carries out the reaction [protein]-with a C-terminal TM segment(out) + ATP + H2O = [protein]-with a C-terminal TM segment(in) + ADP + phosphate + H(+). Outer mitochondrial translocase required to remove mislocalized tail-anchored transmembrane proteins on mitochondria. Specifically recognizes and binds tail-anchored transmembrane proteins: acts as a dislocase that mediates the ATP-dependent extraction of mistargeted tail-anchored transmembrane proteins from the mitochondrion outer membrane. Also plays a critical role in regulating the surface expression of AMPA receptors (AMPAR), thereby regulating synaptic plasticity and learning and memory. Required for NMDA-stimulated AMPAR internalization and inhibition of GRIA1 and GRIA2 recycling back to the plasma membrane; these activities are ATPase-dependent. In Homo sapiens (Human), this protein is Outer mitochondrial transmembrane helix translocase.